The following is a 418-amino-acid chain: Glutamyl-tRNA(Gln) amidotransferase subunit D (418 aa).

The Asparaginase/glutaminase domain maps to 74-405; that stretch reads KNISILSTGG…EDAKELMSKD (332 aa). Residues T84, T160, D161, and K237 contribute to the active site.

This sequence belongs to the asparaginase 1 family. GatD subfamily. As to quaternary structure, heterodimer of GatD and GatE.

The catalysed reaction is L-glutamyl-tRNA(Gln) + L-glutamine + ATP + H2O = L-glutaminyl-tRNA(Gln) + L-glutamate + ADP + phosphate + H(+). Functionally, allows the formation of correctly charged Gln-tRNA(Gln) through the transamidation of misacylated Glu-tRNA(Gln) in organisms which lack glutaminyl-tRNA synthetase. The reaction takes place in the presence of glutamine and ATP through an activated gamma-phospho-Glu-tRNA(Gln). The GatDE system is specific for glutamate and does not act on aspartate. This chain is Glutamyl-tRNA(Gln) amidotransferase subunit D, found in Methanococcus maripaludis (strain C7 / ATCC BAA-1331).